Consider the following 348-residue polypeptide: MO25-like protein At2g03410 (348 aa).

Belongs to the Mo25 family.

The polypeptide is MO25-like protein At2g03410 (Arabidopsis thaliana (Mouse-ear cress)).